The following is a 189-amino-acid chain: MTEYKLVVVGAGGVGKSALTIQLIQNHFVDEYDPTIEDSYRKQVVIDGETCLLDILDTAGQEEYSAMRDQYMRTGEGFLLVFAVNSAKSFEDIGTYREQIKRVKDAEEVPMVLVGNKCDLTTWNVKNEQAREVAKQYGIPYIETSAKTRMGVDDAFYTLVREIRKDKDNKGRRGRKLNKPNRRFKCKIL.

10 to 17 serves as a coordination point for GTP; it reads GAGGVGKS. Residues 32–40 carry the Effector region motif; that stretch reads YDPTIEDSY. Residues 57-61 and 116-119 contribute to the GTP site; these read DTAGQ and NKCD. At C186 the chain carries Cysteine methyl ester. A lipid anchor (S-geranylgeranyl cysteine) is attached at C186. The propeptide at 187 to 189 is removed in mature form; that stretch reads KIL.

Belongs to the small GTPase superfamily. Ras family.

The protein localises to the cell membrane. The enzyme catalyses GTP + H2O = GDP + phosphate + H(+). Its activity is regulated as follows. Alternates between an inactive form bound to GDP and an active form bound to GTP. Activated by a guanine nucleotide-exchange factor (GEF) and inactivated by a GTPase-activating protein (GAP). Ras proteins bind GDP/GTP and possess intrinsic GTPase activity. Plays a role in eye development by regulating cell growth, survival of postmitotic ommatidial cells and differentiation of photoreceptor cells. During larval development, mediates Ptth/tor signaling leading to the production of ecdysone, a hormone required for the initiation of metamorphosis. The polypeptide is Ras-like protein 1 (Drosophila persimilis (Fruit fly)).